A 268-amino-acid chain; its full sequence is Inositol monophosphatase 3 (268 aa).

The Mg(2+) site is built by Glu71, Asp91, Leu93, and Asp94. Residue Glu71 coordinates substrate. Substrate-binding positions include 93-96 (LDGT), 194-196 (GSC), Glu213, and Asp221. Residue Asp221 coordinates Mg(2+).

It belongs to the inositol monophosphatase superfamily. Mg(2+) serves as cofactor. As to expression, expressed in the shoot apex, roots, stems, leaves, flowers and young and mature green fruits.

The catalysed reaction is a myo-inositol phosphate + H2O = myo-inositol + phosphate. Its pathway is polyol metabolism; myo-inositol biosynthesis; myo-inositol from D-glucose 6-phosphate: step 2/2. In terms of biological role, responsible for the provision of inositol required for synthesis of phosphatidylinositol and polyphosphoinositides. The protein is Inositol monophosphatase 3 (IMP3) of Solanum lycopersicum (Tomato).